A 223-amino-acid chain; its full sequence is Killer cell lectin-like receptor subfamily B member 1A (223 aa).

The Cytoplasmic segment spans residues 1-43 (MDTARVYLSLKPSKTAAGAQCVSPPSLPPDACRCPRSHRLALK). Positions 32-35 (CRCP) match the LCK-binding motif motif. The helical; Signal-anchor for type II membrane protein transmembrane segment at 44 to 63 (LSCAGLILLVLALVGMSILV) threads the bilayer. The Extracellular segment spans residues 64-223 (RVLVQKPSVE…LKCECMCNDS (160 aa)). Residues 93–212 (KCPKDWLSHR…DSDNIWVCQK (120 aa)) enclose the C-type lectin domain. 3 cysteine pairs are disulfide-bonded: cysteine 94–cysteine 105, cysteine 122–cysteine 210, and cysteine 189–cysteine 202.

In terms of assembly, homodimer; disulfide-linked. Interacts with tyrosine kinase LCK. In terms of tissue distribution, expressed in natural killer cells.

Its subcellular location is the membrane. Its function is as follows. Plays a stimulatory role on natural killer (NK) cell cytotoxicity. The polypeptide is Killer cell lectin-like receptor subfamily B member 1A (Klrb1a) (Rattus norvegicus (Rat)).